A 371-amino-acid chain; its full sequence is Solute carrier family 35 member F6 (371 aa).

Positions 1 to 18 (MAWTKYQLFLAGLMLVTG) are cleaved as a signal peptide. 2 helical membrane-spanning segments follow: residues 48–68 (FLQAVGMFLGEFSCLAAFYLL) and 89–109 (LLFLPPALCDMTGTSLMYVAL). The EamA domain maps to 104 to 160 (LMYVALNMTSASSFQMLRGAVIIFTGLFSVAFLGRRLVLSQWLGILATIAGLVVVGL). N-linked (GlcNAc...) asparagine glycosylation is present at N110. 7 consecutive transmembrane segments (helical) span residues 117 to 137 (FQMLRGAVIIFTGLFSVAFLG), 140 to 160 (LVLSQWLGILATIAGLVVVGL), 176 to 196 (VITGDLLIIMAQIIVAIQMVL), 216 to 236 (GLFGFVILSLLLVPMYYIPAG), 261 to 281 (LIAVALLGNISSIAFFNFAGI), 295 to 312 (LDSLRTVVIWALSLALGW), and 317 to 336 (ALQILGFLILLIGTALYNGL). Positions 352-371 (EESEQERLLGGTRTPINDAS) are disordered. Phosphothreonine is present on T365.

Belongs to the SLC35F solute transporter family. Interacts with SLC25A5. Expressed in pancreatic ductal adenocarcinoma (PDAC) (at protein level). Strongly expressed in prostate and thyroid. Weakly expressed in lung, heart, liver and kidney.

It localises to the mitochondrion. The protein resides in the lysosome membrane. Involved in the maintenance of mitochondrial membrane potential in pancreatic ductal adenocarcinoma (PDAC) cells. Promotes pancreatic ductal adenocarcinoma (PDAC) cell growth. May play a role as a nucleotide-sugar transporter. This is Solute carrier family 35 member F6 (SLC35F6) from Homo sapiens (Human).